The sequence spans 588 residues: Progranulin (588 aa).

Positions 1 to 17 are cleaved as a signal peptide; sequence MWILVSWLALVARLVAG. Residue Asn-38 is glycosylated (N-linked (GlcNAc...) asparagine). Cystine bridges form between Cys-125/Cys-138, Cys-132/Cys-148, Cys-281/Cys-293, Cys-287/Cys-303, Cys-294/Cys-311, Cys-304/Cys-318, Cys-312/Cys-325, Cys-319/Cys-332, Cys-363/Cys-375, Cys-369/Cys-385, Cys-394/Cys-407, and Cys-401/Cys-413. An N-linked (GlcNAc...) asparagine glycan is attached at Asn-372. N-linked (GlcNAc...) asparagine glycosylation occurs at Asn-525.

Belongs to the granulin family. As to quaternary structure, progranulin is secreted as a homodimer. Interacts with SLPI; interaction protects progranulin from proteolysis. Interacts (via region corresponding to granulin-7 peptide) with CTSD; stabilizes CTSD and increases its proteolytic activity. Interacts (via region corresponding to granulin-7 peptide) with SORT1; this interaction mediates endocytosis and lysosome delivery of progranulin; interaction occurs at the neuronal cell surface in a stressed nervous system. Interacts with PSAP; facilitates lysosomal delivery of progranulin from the extracellular space and the biosynthetic pathway. Forms a complex with PSAP and M6PR; PSAP bridges the binding between progranulin and M6PR. Forms a complex with PSAP and SORT1; progranulin bridges the interaction between PSAP and SORT1; facilitates lysosomal targeting of PSAP via SORT1; interaction enhances PSAP uptake in primary cortical neurons. Interacts (via regions corresponding to granulin-2 and granulin-7 peptides) with GBA1; this interaction prevents aggregation of GBA1-SCARB2 complex via interaction with HSPA1A upon stress. Interacts (via region corresponding to granulin-7 peptide) with HSPA1A; mediates recruitment of HSPA1A to GBA1 and prevents GBA1 aggregation in response to stress. Cleaved by ELANE; proteolysis is blocked by SLPI and is concentration- and time-dependent and induces CXCL8/IL-8 production; granulin-3 and granulin-4 are resistant to ELANE. Cleaved by CTSL in lysosome thus regulating the maturation and turnover of progranulin within the lysosome. In terms of tissue distribution, ubiquitous; most abundant in the spleen and several tissues of endocrine significance.

It localises to the secreted. The protein resides in the lysosome. Its function is as follows. Secreted protein that acts as a key regulator of lysosomal function and as a growth factor involved in inflammation, wound healing and cell proliferation. Regulates protein trafficking to lysosomes, and also the activity of lysosomal enzymes. Also facilitates the acidification of lysosomes, causing degradation of mature CTSD by CTSB. In addition, functions as a wound-related growth factor that acts directly on dermal fibroblasts and endothelial cells to promote division, migration and the formation of capillary-like tubule structures. Also promotes epithelial cell proliferation by blocking TNF-mediated neutrophil activation preventing release of oxidants and proteases. Moreover, modulates inflammation in neurons by preserving neurons survival, axonal outgrowth and neuronal integrity. Inhibits epithelial cell proliferation and induces epithelial cells to secrete IL-8. Functionally, stabilizes CTSD through interaction with CTSD leading to maintain its aspartic-type peptidase activity. The protein is Progranulin (Grn) of Rattus norvegicus (Rat).